A 411-amino-acid chain; its full sequence is Nuclear receptor subfamily 2 group F member 1-A (411 aa).

The interval 1–68 (MAMVVSVWRD…AGDKGSQNSG (68 aa)) is disordered. The span at 24–46 (NPAAQPAREQQQAASAAPHTPQT) shows a compositional bias: low complexity. Residues 73–148 (HIECVVCGDK…VGMRREAVQR (76 aa)) constitute a DNA-binding region (nuclear receptor). 2 consecutive NR C4-type zinc fingers follow at residues 76 to 96 (CVVC…CEGC) and 112 to 136 (CRAN…LKKC). The NR LBD domain occupies 174–400 (YLSGYISLLL…TLIRDMLLSG (227 aa)).

It belongs to the nuclear hormone receptor family. NR2 subfamily. As to expression, first expressed in 11-12 hour embryos. In the rostral brain of 13 hour embryos, expressed within the anterior half of the midbrain and the posterior part of the diencephalon. In the presumptive hindbrain, expressed in a segment-like stripe in the anterior region, resembling the presumptive rhombomere units of the hindbrain. Also detected in the intermediate mesoderm, posterior to the first somite. As somitogenesis proceeds, expression extends posteriorly and flanks the 10 most anterior somites. Expression changes extensively both in level and expansion of domains between 13 and 20 hours. In the rostral brain, expression extends to include a major part of the diencephalon and a caudal portion of the telencephalon. Within the hindbrain, strongly expressed in the two most anterior rhombomeres, and a lower but uniform expression is seen to extend throughout rhombomere 7. In 28 hour embryos, higher and more uniform expression is seen in both rostral and hindbrain areas. Also expressed in the retina of the eye.

The protein resides in the nucleus. In terms of biological role, putative transcription factor that is required in photoreceptor cells precursors during eye development. This chain is Nuclear receptor subfamily 2 group F member 1-A (nr2f1a), found in Danio rerio (Zebrafish).